A 213-amino-acid polypeptide reads, in one-letter code: Probable transaldolase (213 aa).

Residue K83 is the Schiff-base intermediate with substrate of the active site.

This sequence belongs to the transaldolase family. Type 3B subfamily.

It is found in the cytoplasm. The enzyme catalyses D-sedoheptulose 7-phosphate + D-glyceraldehyde 3-phosphate = D-erythrose 4-phosphate + beta-D-fructose 6-phosphate. It participates in carbohydrate degradation; pentose phosphate pathway; D-glyceraldehyde 3-phosphate and beta-D-fructose 6-phosphate from D-ribose 5-phosphate and D-xylulose 5-phosphate (non-oxidative stage): step 2/3. Its function is as follows. Transaldolase is important for the balance of metabolites in the pentose-phosphate pathway. The polypeptide is Probable transaldolase (Syntrophomonas wolfei subsp. wolfei (strain DSM 2245B / Goettingen)).